Reading from the N-terminus, the 164-residue chain is Endoribonuclease YbeY (164 aa).

Positions 111, 115, and 121 each coordinate Zn(2+). Positions Glu140 to Glu164 are disordered. The span at His155–Glu164 shows a compositional bias: polar residues.

Belongs to the endoribonuclease YbeY family. Zn(2+) is required as a cofactor.

The protein localises to the cytoplasm. Single strand-specific metallo-endoribonuclease involved in late-stage 70S ribosome quality control and in maturation of the 3' terminus of the 16S rRNA. This is Endoribonuclease YbeY from Pseudomonas fluorescens (strain SBW25).